Reading from the N-terminus, the 188-residue chain is Elongation factor P (188 aa).

The residue at position 34 (Lys-34) is an N6-(3,6-diaminohexanoyl)-5-hydroxylysine.

Belongs to the elongation factor P family. In terms of processing, may be beta-lysylated on the epsilon-amino group of Lys-34 by the combined action of EpmA and EpmB, and then hydroxylated on the C5 position of the same residue by EpmC (if this protein is present). Lysylation is critical for the stimulatory effect of EF-P on peptide-bond formation. The lysylation moiety may extend toward the peptidyltransferase center and stabilize the terminal 3-CCA end of the tRNA. Hydroxylation of the C5 position on Lys-34 may allow additional potential stabilizing hydrogen-bond interactions with the P-tRNA.

It is found in the cytoplasm. Its pathway is protein biosynthesis; polypeptide chain elongation. Functionally, involved in peptide bond synthesis. Alleviates ribosome stalling that occurs when 3 or more consecutive Pro residues or the sequence PPG is present in a protein, possibly by augmenting the peptidyl transferase activity of the ribosome. Modification of Lys-34 is required for alleviation. This is Elongation factor P from Coxiella burnetii (strain CbuK_Q154) (Coxiella burnetii (strain Q154)).